The primary structure comprises 216 residues: V-type ATP synthase subunit D (216 aa).

This sequence belongs to the V-ATPase D subunit family.

Its function is as follows. Produces ATP from ADP in the presence of a proton gradient across the membrane. The chain is V-type ATP synthase subunit D from Clostridium novyi (strain NT).